The sequence spans 1155 residues: ATP-dependent helicase/deoxyribonuclease subunit B (1155 aa).

In terms of domain architecture, UvrD-like helicase ATP-binding spans 1 to 300 (MSLRFIVGRA…AHLEKYYFRH (300 aa)). 8-15 (GRAGSGKS) contributes to the ATP binding site. Residues 280-590 (TPVRFQKDSA…VVGTLERSRN (311 aa)) enclose the UvrD-like helicase C-terminal domain. Residues cysteine 792, cysteine 1111, cysteine 1114, and cysteine 1120 each coordinate [4Fe-4S] cluster.

This sequence belongs to the helicase family. AddB/RexB type 1 subfamily. Heterodimer of AddA and AddB. The cofactor is Mg(2+). [4Fe-4S] cluster is required as a cofactor.

The heterodimer acts as both an ATP-dependent DNA helicase and an ATP-dependent, dual-direction single-stranded exonuclease. Recognizes the chi site generating a DNA molecule suitable for the initiation of homologous recombination. The AddB subunit has 5' -&gt; 3' nuclease activity but not helicase activity. The sequence is that of ATP-dependent helicase/deoxyribonuclease subunit B from Desulforamulus reducens (strain ATCC BAA-1160 / DSM 100696 / MI-1) (Desulfotomaculum reducens).